The sequence spans 472 residues: Adenosylhomocysteinase (472 aa).

Residues T62, D137, and E197 each contribute to the substrate site. 198–200 (TTT) is an NAD(+) binding site. Substrate is bound by residues K227 and D231. NAD(+)-binding positions include N232, 261 to 266 (GYGDVG), E284, N319, 340 to 342 (IGH), and N385.

The protein belongs to the adenosylhomocysteinase family. It depends on NAD(+) as a cofactor.

The protein localises to the cytoplasm. The catalysed reaction is S-adenosyl-L-homocysteine + H2O = L-homocysteine + adenosine. It participates in amino-acid biosynthesis; L-homocysteine biosynthesis; L-homocysteine from S-adenosyl-L-homocysteine: step 1/1. Its function is as follows. May play a key role in the regulation of the intracellular concentration of adenosylhomocysteine. The polypeptide is Adenosylhomocysteinase (Bordetella bronchiseptica (strain ATCC BAA-588 / NCTC 13252 / RB50) (Alcaligenes bronchisepticus)).